The primary structure comprises 417 residues: NADH-quinone oxidoreductase subunit D (417 aa).

Belongs to the complex I 49 kDa subunit family. In terms of assembly, NDH-1 is composed of 14 different subunits. Subunits NuoB, C, D, E, F, and G constitute the peripheral sector of the complex.

It is found in the cell inner membrane. The enzyme catalyses a quinone + NADH + 5 H(+)(in) = a quinol + NAD(+) + 4 H(+)(out). Functionally, NDH-1 shuttles electrons from NADH, via FMN and iron-sulfur (Fe-S) centers, to quinones in the respiratory chain. The immediate electron acceptor for the enzyme in this species is believed to be ubiquinone. Couples the redox reaction to proton translocation (for every two electrons transferred, four hydrogen ions are translocated across the cytoplasmic membrane), and thus conserves the redox energy in a proton gradient. The sequence is that of NADH-quinone oxidoreductase subunit D from Polaromonas sp. (strain JS666 / ATCC BAA-500).